Consider the following 460-residue polypeptide: UDP-N-acetylmuramoylalanine--D-glutamate ligase (460 aa).

122-128 (GSNGKST) contributes to the ATP binding site.

Belongs to the MurCDEF family.

Its subcellular location is the cytoplasm. It carries out the reaction UDP-N-acetyl-alpha-D-muramoyl-L-alanine + D-glutamate + ATP = UDP-N-acetyl-alpha-D-muramoyl-L-alanyl-D-glutamate + ADP + phosphate + H(+). It participates in cell wall biogenesis; peptidoglycan biosynthesis. Functionally, cell wall formation. Catalyzes the addition of glutamate to the nucleotide precursor UDP-N-acetylmuramoyl-L-alanine (UMA). This chain is UDP-N-acetylmuramoylalanine--D-glutamate ligase, found in Jannaschia sp. (strain CCS1).